The primary structure comprises 101 residues: Small ribosomal subunit protein uS14 (101 aa).

Positions 1–11 are enriched in basic and acidic residues; sequence MAKKSAIETNE. A disordered region spans residues 1–20; it reads MAKKSAIETNERRRKLATGH.

It belongs to the universal ribosomal protein uS14 family. As to quaternary structure, part of the 30S ribosomal subunit. Contacts proteins S3 and S10.

Its function is as follows. Binds 16S rRNA, required for the assembly of 30S particles and may also be responsible for determining the conformation of the 16S rRNA at the A site. In Xanthobacter autotrophicus (strain ATCC BAA-1158 / Py2), this protein is Small ribosomal subunit protein uS14.